The chain runs to 450 residues: Tripartite motif-containing protein 64C (450 aa).

Residues 15 to 56 (CCICVNYFIDPVTTDCVHSFCRPCLCLCSEEGRAPMRCPLCR) form an RING-type zinc finger. Residues 87–128 (SSDNICVLHEETKELFCEADKRLLCGPCSESPEHMAHSHSPI) form a B box-type zinc finger. Residues C92, H95, C114, and H120 each contribute to the Zn(2+) site. A coiled-coil region spans residues 191–218 (DEEEQRHLQALEREAKELFQQLQDSQVR). In terms of domain architecture, B30.2/SPRY spans 269–450 (ELTSWCITGV…LRPFFCFGCT (182 aa)).

It belongs to the TRIM/RBCC family.

The sequence is that of Tripartite motif-containing protein 64C (TRIM64C) from Homo sapiens (Human).